Here is a 275-residue protein sequence, read N- to C-terminus: NH(3)-dependent NAD(+) synthetase (275 aa).

ATP is bound at residue 46–53 (GISGGQDS). Residue Asp52 coordinates Mg(2+). Arg140 provides a ligand contact to deamido-NAD(+). Thr160 is an ATP binding site. Glu165 provides a ligand contact to Mg(2+). Lys173 and Asp180 together coordinate deamido-NAD(+). Residues Lys189 and Thr211 each coordinate ATP. Residue 260–261 (HK) participates in deamido-NAD(+) binding.

It belongs to the NAD synthetase family. Homodimer.

It catalyses the reaction deamido-NAD(+) + NH4(+) + ATP = AMP + diphosphate + NAD(+) + H(+). It participates in cofactor biosynthesis; NAD(+) biosynthesis; NAD(+) from deamido-NAD(+) (ammonia route): step 1/1. Its function is as follows. Catalyzes the ATP-dependent amidation of deamido-NAD to form NAD. Uses ammonia as a nitrogen source. This is NH(3)-dependent NAD(+) synthetase from Escherichia coli O7:K1 (strain IAI39 / ExPEC).